The following is a 152-amino-acid chain: SUZ RNA-binding domain-containing (152 aa).

M1 is subject to N-acetylmethionine. Positions 30 to 152 (TQKESRKSKS…DGSQGFKQRR (123 aa)) are disordered. S37, S39, and S51 each carry phosphoserine. The region spanning 42 to 107 (KVPIVIQDDS…ARKRILGSAS (66 aa)) is the SUZ domain. Residues 66–81 (PTSNGVVSSPNSTSRP) show a composition bias toward polar residues. Over residues 89–100 (AQREAEYAEARK) the composition is skewed to basic and acidic residues. S105 and S107 each carry phosphoserine. The 42-residue stretch at 111-152 (EQEKPILDRPTRISQPEDSRQPNNVIRQPLGPDGSQGFKQRR) folds into the SUZ-C domain. A compositionally biased stretch (basic and acidic residues) spans 113–130 (EKPILDRPTRISQPEDSR).

It belongs to the SZRD1 family.

The sequence is that of SUZ RNA-binding domain-containing (SZRD1) from Homo sapiens (Human).